We begin with the raw amino-acid sequence, 236 residues long: Ribose-5-phosphate isomerase (236 aa).

Substrate-binding positions include T27–T30, D84–D87, and K97–G100. The active-site Proton acceptor is the E106. Residue K124 coordinates substrate.

It belongs to the ribose 5-phosphate isomerase family. As to quaternary structure, homodimer.

It catalyses the reaction aldehydo-D-ribose 5-phosphate = D-ribulose 5-phosphate. It functions in the pathway carbohydrate degradation; pentose phosphate pathway; D-ribose 5-phosphate from D-ribulose 5-phosphate (non-oxidative stage): step 1/1. Involved in the first step of the non-oxidative branch of the pentose phosphate pathway. It catalyzes the reversible conversion of ribose-5-phosphate to ribulose 5-phosphate. This Plasmodium falciparum (isolate 3D7) protein is Ribose-5-phosphate isomerase.